We begin with the raw amino-acid sequence, 668 residues long: UvrABC system protein B (668 aa).

In terms of domain architecture, Helicase ATP-binding spans 25-170 (NSILLGNKYQ…FVGQKISIKE (146 aa)). 38–45 (GVTGSGKT) is an ATP binding site. The short motif at 91 to 114 (YYDYYQPESYVPSKDLFIEKEATI) is the Beta-hairpin element. The 167-residue stretch at 429–595 (QMEDLYSEIQ…TIVKKIQNIL (167 aa)) folds into the Helicase C-terminal domain. Residues 622 to 657 (KKLIDKLKFDLEEAVNDERFEDAIVLRDKIKELSSK) enclose the UVR domain.

Belongs to the UvrB family. Forms a heterotetramer with UvrA during the search for lesions. Interacts with UvrC in an incision complex.

It is found in the cytoplasm. The UvrABC repair system catalyzes the recognition and processing of DNA lesions. A damage recognition complex composed of 2 UvrA and 2 UvrB subunits scans DNA for abnormalities. Upon binding of the UvrA(2)B(2) complex to a putative damaged site, the DNA wraps around one UvrB monomer. DNA wrap is dependent on ATP binding by UvrB and probably causes local melting of the DNA helix, facilitating insertion of UvrB beta-hairpin between the DNA strands. Then UvrB probes one DNA strand for the presence of a lesion. If a lesion is found the UvrA subunits dissociate and the UvrB-DNA preincision complex is formed. This complex is subsequently bound by UvrC and the second UvrB is released. If no lesion is found, the DNA wraps around the other UvrB subunit that will check the other stand for damage. This chain is UvrABC system protein B, found in Borreliella burgdorferi (strain ZS7) (Borrelia burgdorferi).